The primary structure comprises 143 residues: Cytotoxic L-amino-acid oxidase (143 aa).

This sequence belongs to the flavin monoamine oxidase family. FAD serves as cofactor.

The enzyme catalyses an L-alpha-amino acid + O2 + H2O = a 2-oxocarboxylate + H2O2 + NH4(+). Its function is as follows. Cytotoxic L-amino acid oxidase with high oxidase activity towards DL-methionine and L-methionine, L-phenylalanine, DL-norleucine, L-isoleucine, L-arginine, L-tyrosine, and DL-leucine. Shows relatively low activity towards DL-lysine and L-lysine, DL-asparagine, DL-valine, L-histidine, DL-threonine, DL-tryptophan, and L-glutamic acid; and no activity towards L-cysteine, L-glycine, L-proline, L-oxyproline, DL-serine, and DL-aspartic acid. Does not use benzylamine, ethanolamine, diethylamine, meta- and para-phenylendiamine, ortho-, meta- and para-aminophenols, or putrescin as a substrate. Acts as a toxin by inducing chromatin condensation, as well as DNA and nucleus fragmentation, which are typical for apoptosis. Probably induces cell damage indirectly via the generation of free radicals and oxidant agents that can trigger cell impairment and apoptosis by a caspase-independent pathway. The polypeptide is Cytotoxic L-amino-acid oxidase (Amanita phalloides (Death cap)).